The chain runs to 359 residues: DNA integrity scanning protein DisA (359 aa).

The DAC domain maps to 7 to 146; sequence DEVLRQTLAI…NRRYVLEGSD (140 aa). Residues G74, L92, and 105 to 109 contribute to the ATP site; that span reads TRHRT.

It belongs to the DisA family. As to quaternary structure, homooctamer. The cofactor is Mg(2+).

It catalyses the reaction 2 ATP = 3',3'-c-di-AMP + 2 diphosphate. In terms of biological role, participates in a DNA-damage check-point. DisA forms globular foci that rapidly scan along the chromosomes searching for lesions. Also has diadenylate cyclase activity, catalyzing the condensation of 2 ATP molecules into cyclic di-AMP (c-di-AMP). c-di-AMP likely acts as a signaling molecule that may couple DNA integrity with a cellular process. This Kineococcus radiotolerans (strain ATCC BAA-149 / DSM 14245 / SRS30216) protein is DNA integrity scanning protein DisA.